Here is a 781-residue protein sequence, read N- to C-terminus: Catenin beta-1 (781 aa).

Residue Ala2 is modified to N-acetylalanine. The segment at 2 to 23 (ATQADLMELDMAMEPDRKAAVS) is interaction with VCL. Position 23 is a phosphoserine; by GSK3-beta; alternate (Ser23). Residue Ser23 is glycosylated (O-linked (GlcNAc) serine; alternate). Ser29 bears the Phosphoserine; by GSK3-beta mark. A phosphoserine; by GSK3-beta and HIPK2 mark is found at Ser33 and Ser37. The tract at residues 34–57 (GIHSGATTTAPSLSGKGNPEEEDV) is disordered. At Thr41 the chain carries Phosphothreonine; by GSK3-beta. Ser45 carries the post-translational modification Phosphoserine. Lys49 bears the N6-acetyllysine mark. At Tyr64 the chain carries Phosphotyrosine; by PTK6. Position 142 is a phosphotyrosine; by FYN and PTK6 (Tyr142). 12 ARM repeats span residues 151 to 191 (RAIP…IMRS), 193 to 234 (QMVS…IFKS), 235 to 276 (GGIP…VRLA), 277 to 318 (GGLQ…ILAS), 319 to 360 (GGPQ…IVEA), 361 to 389 (GGMQALGPHLTDPSQRLVQNCLWTLRNLS), 400 to 441 (GLLG…VCQV), 442 to 484 (GGIE…AQNA), 489 to 530 (YGLP…LREQ), 531 to 571 (GAIP…EIVE), 594 to 636 (NTIP…AEGA), and 637 to 666 (TAPLTELLHSRNEGVATYAAAVLFRMSEDK). The tract at residues 156–178 (LTKLLNDEDQVVVNKAAVMVHQL) is interaction with BCL9. A Phosphoserine modification is found at Ser191. Ser246 bears the Phosphoserine; by CDK5 mark. 2 positions are modified to phosphotyrosine: Tyr331 and Tyr333. Ser552 is modified (phosphoserine). Thr556 is subject to Phosphothreonine. At Cys619 the chain carries S-nitrosocysteine. Ser675 is modified (phosphoserine). The interval 720–781 (HSGGYGQDAL…NQLAWFDTDL (62 aa)) is disordered. The span at 734–745 (MMEHEMGGHHPG) shows a compositional bias: basic and acidic residues. Residues 772–781 (NQLAWFDTDL) form an interaction with SCRIB region.

This sequence belongs to the beta-catenin family. As to quaternary structure, two separate complex-associated pools are found in the cytoplasm. The majority is present as component of an E-cadherin/ catenin adhesion complex composed of at least E-cadherin/CDH1 and beta-catenin/CTNNB1, and possibly alpha-catenin/CTNNA1; the complex is located to adherens junctions. The stable association of CTNNA1 is controversial as CTNNA1 was shown not to bind to F-actin when assembled in the complex. Alternatively, the CTNNA1-containing complex may be linked to F-actin by other proteins such as LIMA1. Another cytoplasmic pool is part of a large complex containing AXIN1, AXIN2, APC, CSNK1A1 and GSK3B that promotes phosphorylation on N-terminal Ser and Thr residues and ubiquitination of CTNNB1. Interacts directly with AXIN1; the interaction is regulated by CK2 via BTRC and its subsequent degradation by the proteasome. Interacts directly with AXIN1; the interaction is regulated by CDK2 phosphorylation. Wnt-dependent activation of DVL antagonizes the action of GSK3B. When GSK3B activity is inhibited the complex dissociates, CTNNB1 is dephosphorylated and is no longer targeted for destruction. The stabilized protein translocates to the nucleus, where it binds TCF/LEF-1 family members, BCL9, BCL9L and possibly also RUVBL1 and CHD8. Binds CTNNBIP and EP300. CTNNB1 forms a ternary complex with LEF1 and EP300 that is disrupted by CTNNBIP1 binding. Interacts with TAX1BP3 (via the PDZ domain); this interaction inhibits the transcriptional activity of CTNNB1. Interacts with AJAP1, BAIAP1, CARM1, CTNNA3, CXADR and PCDH11Y. Binds NHERF1. Interacts with GLIS2. Interacts with XIRP1. Interacts with PTPRU (via the cytoplasmic juxtamembrane domain) and with SLC30A9. Interacts with EMD. Interacts with SCRIB. Interacts with TNIK and TCF7L2. Interacts with SESTD1 and TRPC4. Interacts directly with AXIN1; the interaction is regulated by CDK2 phosphorylation of AXIN1. Interacts with CAV1. Interacts with TRPV4. The TRPV4 and CTNNB1 complex can interact with CDH1. Interacts with VCL. Interacts with PTPRJ. Interacts with PKT7. Interacts with NANOS1. Interacts with CDK2, NDRG2, NEK2 and CDK5. Found in a complex composed of MACF1, APC, AXIN1, CTNNB1 and GSK3B. Interacts with PTK6. Interacts with SOX7; this interaction may lead to proteasomal degradation of active CTNNB1 and thus inhibition of Wnt/beta-catenin-stimulated transcription. Identified in a complex with HINT1 and MITF. Interacts with FHIT. The CTNNB1 and TCF4 complex interacts with PML. Interacts with FERMT2. Identified in a complex with TCF4 and FERMT2. Interacts with RAPGEF2. Interacts with FAT1 (via the cytoplasmic domain). Interacts with RORA. May interact with P-cadherin/CDH3. Interacts with RNF220. Interacts with CTNND2. Interacts (via the C-terminal region) with CBY1. The complex composed, at least, of APC, CTNNB1 and GSK3B interacts with JPT1; the interaction requires the inactive form of GSK3B (phosphorylated at 'Ser-9'). Interacts with DLG5. Interacts with FAM53B; promoting translocation to the nucleus. Interacts with TMEM170B. Interacts with AHI1. Interacts with GID8. Component of an cadherin:catenin adhesion complex composed of at least of CDH26, beta-catenin/CTNNB1, alpha-catenin/CTNNA1 and p120 catenin/CTNND1. Forms a complex comprising APPL1, RUVBL2, APPL2, HDAC1 and HDAC2. Interacts with IRF2BPL; mediates the ubiquitination and degradation of CTNNB1. Interacts with AMFR. Interacts with LMBR1L. Interacts with SOX30; prevents interaction of CTNNB1 with TCF7L2/TCF4 and leads to inhibition of Wnt signaling. Interacts with SOX9; inhibiting CTNNB1 activity by competing with the binding sites of TCF/LEF within CTNNB1, thereby inhibiting the Wnt signaling. Interacts with SPN/CD43 cytoplasmic tail. Interacts (when phosphorylated at Tyr-333) with isoform M2 of PKM (PKM2); promoting transcription activation. Interacts with PKP2 (via HEAD domain). Interacts with CDH1. Interacts (when unphosphorylated) with FLYWCH1, perhaps preventing interaction of CTNNB1 with TCF4, and thereby regulating transcription activation; phosphorylation of CTNNB1 may inhibit the interaction. Interacts (via the central armadillo domains) with probable transcriptional regulator ADNP (via N-terminal region); interaction is direct and stabilizes CTNNB1 by modulating its phosphorylation by glycogen synthase kinase-3 beta GSK3B. Interacts with NR5A2. Interacts with DSG2; the interaction promotes localization of CTNNB1 at cell junctions thus reducing its nuclear localization and subsequent transcription of CTNNB1/TCF-target genes. In terms of processing, phosphorylation by GSK3B requires prior phosphorylation of Ser-45 by another kinase. Phosphorylation proceeds then from Thr-41 to Ser-33. Phosphorylated by NEK2. EGF stimulates tyrosine phosphorylation. Phosphorylated on Ser-33 and Ser-37 by HIPK2. This phosphorylation triggers proteasomal degradation. Phosphorylation at Ser-552 by AMPK promotes stabilization of the protein, enhancing TCF/LEF-mediated transcription. Phosphorylation on Ser-191 and Ser-246 by CDK5. Phosphorylation by CDK2 regulates insulin internalization. Phosphorylation by PTK6 at Tyr-64, Tyr-142, Tyr-331 and/or Tyr-333 with the predominant site at Tyr-64 is not essential for inhibition of transcriptional activity. Phosphorylation by SRC at Tyr-333 promotes interaction with isoform M2 of PKM (PKM2); promoting transcription activation. Post-translationally, ubiquitinated by the SCF(BTRC) E3 ligase complex when phosphorylated by GSK3B, leading to its degradation. Ubiquitinated by a E3 ubiquitin ligase complex containing UBE2D1, SIAH1, CACYBP/SIP, SKP1, APC and TBL1X, leading to its subsequent proteasomal degradation. Ubiquitinated and degraded following interaction with SOX9. Ubiquitinated via 'Lys-11'- and 'Lys-29'-linked ubiquitin chains by UBR5, leading to its stabilization. S-nitrosylation at Cys-619 within adherens junctions promotes VEGF-induced, NO-dependent endothelial cell permeability by disrupting interaction with E-cadherin, thus mediating disassembly adherens junctions. In terms of processing, O-glycosylation at Ser-23 decreases nuclear localization and transcriptional activity, and increases localization to the plasma membrane and interaction with E-cadherin CDH1. Post-translationally, deacetylated at Lys-49 by SIRT1. In terms of tissue distribution, expressed in the testis.

The protein localises to the cytoplasm. It is found in the nucleus. Its subcellular location is the cytoskeleton. The protein resides in the cell junction. It localises to the adherens junction. The protein localises to the cell membrane. It is found in the microtubule organizing center. Its subcellular location is the centrosome. The protein resides in the spindle pole. It localises to the synapse. The protein localises to the cilium basal body. Key downstream component of the canonical Wnt signaling pathway. In the absence of Wnt, forms a complex with AXIN1, AXIN2, APC, CSNK1A1 and GSK3B that promotes phosphorylation on N-terminal Ser and Thr residues and ubiquitination of CTNNB1 via BTRC and its subsequent degradation by the proteasome. In the presence of Wnt ligand, CTNNB1 is not ubiquitinated and accumulates in the nucleus, where it acts as a coactivator for transcription factors of the TCF/LEF family, leading to activate Wnt responsive genes. Also acts as a coactivator for other transcription factors, such as NR5A2. Promotes epithelial to mesenchymal transition/mesenchymal to epithelial transition (EMT/MET) via driving transcription of CTNNB1/TCF-target genes. Involved in the regulation of cell adhesion, as component of an E-cadherin:catenin adhesion complex. Acts as a negative regulator of centrosome cohesion. Involved in the CDK2/PTPN6/CTNNB1/CEACAM1 pathway of insulin internalization. Blocks anoikis of malignant kidney and intestinal epithelial cells and promotes their anchorage-independent growth by down-regulating DAPK2. Disrupts PML function and PML-NB formation by inhibiting RANBP2-mediated sumoylation of PML. Promotes neurogenesis by maintaining sympathetic neuroblasts within the cell cycle. Involved in chondrocyte differentiation via interaction with SOX9: SOX9-binding competes with the binding sites of TCF/LEF within CTNNB1, thereby inhibiting the Wnt signaling. Acts as a positive regulator of odontoblast differentiation during mesenchymal tooth germ formation, via promoting the transcription of differentiation factors such as LEF1, BMP2 and BMP4. Activity is repressed in a MSX1-mediated manner at the bell stage of mesenchymal tooth germ formation which prevents premature differentiation of odontoblasts. This chain is Catenin beta-1, found in Rattus norvegicus (Rat).